The following is a 414-amino-acid chain: uncharacterized protein (414 aa).

Residues 1–66 (MNPSVPKVMK…LQRISKDYLK (66 aa)) are Lumenal-facing. Positions 20 to 51 (SKEMNDTSLQLPSTTRSLSPKESNSNEDFNVD) are disordered. Residues 25–51 (DTSLQLPSTTRSLSPKESNSNEDFNVD) are compositionally biased toward polar residues. Lysine 40 is covalently cross-linked (Glycyl lysine isopeptide (Lys-Gly) (interchain with G-Cter in ubiquitin)). The chain crosses the membrane as a helical span at residues 67–87 (PNIGLVLLTVSYFFNSAMVVS). An EamA 1 domain is found at 78–215 (YFFNSAMVVS…SLLGVVLIVR (138 aa)). The Cytoplasmic portion of the chain corresponds to 88 to 106 (TKVLENDPDDIANDRQIKP). Residues 107–127 (LQILLVRMVITYIGTLIYMYI) traverse the membrane as a helical segment. Topologically, residues 128-144 (NKSTISDVPFGKPEVRK) are lumenal. Residues 145–167 (WLVLRGCTGFFGVFGMYYSLMYL) form a helical membrane-spanning segment. Residues 168–171 (TISD) are Cytoplasmic-facing. A helical membrane pass occupies residues 172-191 (AVLITFLAPSLTIFLSWVIL). At 192–199 (RERFTKVE) the chain is on the lumenal side. The chain crosses the membrane as a helical span at residues 200–220 (ALGSLISLLGVVLIVRPSFLF). Topologically, residues 221 to 241 (GTPELTDSSSQIVESSDPKSR) are cytoplasmic. Residues 242–262 (LIATLVGLWGVLGMSCVYIII) form a helical membrane-spanning segment. Residues 253-379 (LGMSCVYIII…IISATLWVIR (127 aa)) enclose the EamA 2 domain. Residues 263-269 (RYIGKRA) are Lumenal-facing. Residues 270–290 (HAIMSVSYFSLITAIVSFIGI) form a helical membrane-spanning segment. The Cytoplasmic portion of the chain corresponds to 291–307 (NTIPSMKFQIPHSKKQW). The helical transmembrane segment at 308–328 (ILFGNLGVSGFIFQLLLTMGI) threads the bilayer. Residues 329–357 (QRERAGRGSLMTYTQLLYAVFWDVALYKH) are Lumenal-facing. The helical transmembrane segment at 358 to 378 (WPNIWSWIGMIIIISATLWVI) threads the bilayer. Over 379–414 (RIRAANNETTAKDLTPIIDDEENSIPLTEFDLSDSK) the chain is Cytoplasmic.

The protein to yeast YPL264c.

The protein resides in the membrane. This is an uncharacterized protein from Saccharomyces cerevisiae (strain ATCC 204508 / S288c) (Baker's yeast).